The sequence spans 208 residues: A-type ATP synthase subunit E (208 aa).

Residues 37-57 (DAEKTAEAEKNKILDNGKKQS) are disordered.

Belongs to the V-ATPase E subunit family. In terms of assembly, has multiple subunits with at least A(3), B(3), C, D, E, F, H, I and proteolipid K(x).

The protein localises to the cell membrane. In terms of biological role, component of the A-type ATP synthase that produces ATP from ADP in the presence of a proton gradient across the membrane. This is A-type ATP synthase subunit E from Methanobrevibacter smithii (strain ATCC 35061 / DSM 861 / OCM 144 / PS).